The following is a 314-amino-acid chain: Methionyl-tRNA formyltransferase (314 aa).

A (6S)-5,6,7,8-tetrahydrofolate-binding site is contributed by 113-116; it reads SLLP.

It belongs to the Fmt family.

The enzyme catalyses L-methionyl-tRNA(fMet) + (6R)-10-formyltetrahydrofolate = N-formyl-L-methionyl-tRNA(fMet) + (6S)-5,6,7,8-tetrahydrofolate + H(+). Functionally, attaches a formyl group to the free amino group of methionyl-tRNA(fMet). The formyl group appears to play a dual role in the initiator identity of N-formylmethionyl-tRNA by promoting its recognition by IF2 and preventing the misappropriation of this tRNA by the elongation apparatus. In Ectopseudomonas mendocina (strain ymp) (Pseudomonas mendocina), this protein is Methionyl-tRNA formyltransferase.